A 483-amino-acid chain; its full sequence is MTVQTFIPNGAKAASENTVNQPVHTSDVSIKKLYIETQGCQMNEYDSHRMADLLGDSHGYVLTTDPKEADILLMNTCSIREKAQEKVFSELGRWRKLKQQNPDLIIGVGGCVASQEGDNIQKRAPYVDMVFGPQTLHRLPQMLDQHQDQIEKPKKDKIKLVDISFPDIEKFDFLPEPRVEGFKAFVSIMEGCSKYCSFCVVPYTRGEEVSRPLDDVLAEIAGLAEKGVREISLLGQNVNGYRGETFEGGICTFPELLRLVSEIPGIGRLRYTTSHPLEFSEELIQCYRDLPQMVSHLHLPVQSGSNAVLQAMKRNHTIDVYIEKIAKLRKIRPDMHLSSDFIIGFPGETEQNFEETYQFIKDLDFDHSYSFIYSKRPGTPASELEDTTSEAVKKERLAKVQHWIKQSSIRKTDAMQGTIQRVLIENVSEKDPNLLVGTADNTRLVTFVGDPMWVGRFAEIEITEIKTLNLVYGELLNLEPDVA.

Residues 31-148 enclose the MTTase N-terminal domain; that stretch reads KKLYIETQGC…LPQMLDQHQD (118 aa). The [4Fe-4S] cluster site is built by cysteine 40, cysteine 77, cysteine 111, cysteine 192, cysteine 196, and cysteine 199. The 233-residue stretch at 178–410 folds into the Radical SAM core domain; it reads RVEGFKAFVS…QHWIKQSSIR (233 aa). The TRAM domain occupies 413-477; sequence DAMQGTIQRV…LNLVYGELLN (65 aa).

Belongs to the methylthiotransferase family. MiaB subfamily. Monomer. Requires [4Fe-4S] cluster as cofactor.

It is found in the cytoplasm. It carries out the reaction N(6)-dimethylallyladenosine(37) in tRNA + (sulfur carrier)-SH + AH2 + 2 S-adenosyl-L-methionine = 2-methylsulfanyl-N(6)-dimethylallyladenosine(37) in tRNA + (sulfur carrier)-H + 5'-deoxyadenosine + L-methionine + A + S-adenosyl-L-homocysteine + 2 H(+). In terms of biological role, catalyzes the methylthiolation of N6-(dimethylallyl)adenosine (i(6)A), leading to the formation of 2-methylthio-N6-(dimethylallyl)adenosine (ms(2)i(6)A) at position 37 in tRNAs that read codons beginning with uridine. The chain is tRNA-2-methylthio-N(6)-dimethylallyladenosine synthase from Acinetobacter baylyi (strain ATCC 33305 / BD413 / ADP1).